We begin with the raw amino-acid sequence, 301 residues long: Tyrosine recombinase XerC (301 aa).

In terms of domain architecture, Core-binding (CB) spans 1-89 (MGLDGLAAYL…SWRQYCVWLV (89 aa)). The 181-residue stretch at 110–290 (RVPKALPQEW…DFDHIARLYD (181 aa)) folds into the Tyr recombinase domain. Catalysis depends on residues Arg-151, Lys-175, His-242, Arg-245, and His-268. The O-(3'-phospho-DNA)-tyrosine intermediate role is filled by Tyr-277.

This sequence belongs to the 'phage' integrase family. XerC subfamily. As to quaternary structure, forms a cyclic heterotetrameric complex composed of two molecules of XerC and two molecules of XerD.

It localises to the cytoplasm. Functionally, site-specific tyrosine recombinase, which acts by catalyzing the cutting and rejoining of the recombining DNA molecules. The XerC-XerD complex is essential to convert dimers of the bacterial chromosome into monomers to permit their segregation at cell division. It also contributes to the segregational stability of plasmids. This is Tyrosine recombinase XerC from Neisseria meningitidis serogroup B (strain ATCC BAA-335 / MC58).